The primary structure comprises 357 residues: MPQTLHVHSRVKDYDILFTNHVLKTLADCLGERKQRKLLFITDQTVYHLYQTLFEEFAQQYNAFVHVCPPGGQSKSLERVSAIYDQLIAENFSKKDMIVTIGGGVVGDLGGFVAATYYRGIPYIQIPTTLLSQVDSSIGGKVGVHFKGLTNMIGSIYPPEAIIISTTFLETLPQREFSCGISEMLKIGFIHDRPLFQQLRDFQKETDKQGLERLIYQSISNKKRIVEQDEFENGLRMSLNFGHTLGHAIESLCHHDFYHHGEAIAIGMVVDAKLAVSKGLLPKEDLDSLLQVFERYQLPTTLERADVSATSLFDVFKTDKKNSEQHIIFILPTETGFTTLAINKDDHQFVEKLDSLL.

NAD(+) is bound by residues glycine 104–aspartate 108, threonine 128–threonine 129, lysine 141, and phenylalanine 168–threonine 171. Positions 183, 243, and 260 each coordinate Zn(2+).

It belongs to the sugar phosphate cyclases superfamily. Dehydroquinate synthase family. Co(2+) serves as cofactor. It depends on Zn(2+) as a cofactor. NAD(+) is required as a cofactor.

It is found in the cytoplasm. The enzyme catalyses 7-phospho-2-dehydro-3-deoxy-D-arabino-heptonate = 3-dehydroquinate + phosphate. Its pathway is metabolic intermediate biosynthesis; chorismate biosynthesis; chorismate from D-erythrose 4-phosphate and phosphoenolpyruvate: step 2/7. Functionally, catalyzes the conversion of 3-deoxy-D-arabino-heptulosonate 7-phosphate (DAHP) to dehydroquinate (DHQ). The sequence is that of 3-dehydroquinate synthase from Streptococcus pyogenes serotype M5 (strain Manfredo).